The following is a 916-amino-acid chain: Protein prickle (916 aa).

Disordered stretches follow at residues 49–105 (PLSP…AGGS) and 127–176 (QHLQ…IPVD). Residues 145-156 (SSPSPALSSSIT) show a composition bias toward low complexity. The segment covering 157 to 171 (TGGGGVTRGGGGGGH) has biased composition (gly residues). Positions 167-275 (GGGGHIIPVD…TVKQLATNQI (109 aa)) constitute a PET domain. LIM zinc-binding domains lie at 274–338 (QICD…ETLK), 339–399 (PRCS…MFAE), and 400–462 (YCDF…GEPP). Disordered stretches follow at residues 460–593 (EPPT…PNHR), 635–671 (VIPG…QPQS), 692–725 (DAIQ…ENLP), and 763–870 (RSKS…DTVY). 3 stretches are compositionally biased toward polar residues: residues 507-517 (SPISERSTPHS), 526-569 (EMST…SRTL), and 642-654 (AKTN…SMPE). The segment covering 655–671 (LSQSLQQQQQQQQQPQS) has biased composition (low complexity). A compositionally biased stretch (basic residues) spans 777-793 (RSSKSKRRSSHHHQHHR). Residues 796-805 (GESSSYSGTS) are compositionally biased toward low complexity. Residues 829 to 844 (VPDVEFIEHQDHHRGD) show a composition bias toward basic and acidic residues. The span at 852 to 867 (RSVCSTCSSSSSSADD) shows a compositional bias: low complexity.

The protein belongs to the prickle / espinas / testin family. Interacts with dsh; PET and LIM domains interact with dsh DEP domain, in wing cells. Interacts with Vang in photoreceptor cells.

The protein resides in the cell membrane. In terms of biological role, acts in a planar cell polarity (PCP) complex; polarization along the apical/basal axis of epithelial cells. PCP signaling in the wing disk requires the receptor fz and the cytoplasmic proteins dsh and pk. These act in a feedback loop leading to activation of the jnk cascade and subsequent polarized arrangement of hairs and bristles. Dgo and pk compete with one another for dsh binding, thereby modulating fz dsh activity and ensuring tight control over fz PCP signaling. Vang, stan and pk function together to regulate the establishment of tissue polarity in the adult eye. The chain is Protein prickle from Aedes aegypti (Yellowfever mosquito).